The following is a 418-amino-acid chain: MAEIKNYTLNFGPQHPAAHGVLRLVLELDGEVIQRADPHIGLLHRGTEKLAEHKTFIQALPYMDRLDYVSMMCNEHAYVMAIEKMLGVEAPLRAQYIRVMFDEITRILNHLMSLGSHALDVGAMAVFLYAFREREDLMDCYEAVSGARMHAAYYRPGGVYRDLPDTMAQYGETSKYRSDKELRAMNDARSGSLLDFIEDFTNRFPACVDEYETLLTDNRIWKQRLVGIGVVDPDRAKALGFTGPMLRGSGVAWDLRKTQPYEVYDLMDFDVPVGVNGDCYDRYLVRVAELRESNRIIRQCVEWLRNNPGPVMIENHKIAPPKREAMKSNMEELIHHFKLFTEGFHVPPGEAYAAVEHPKGEFGIYLVSDGANKPYRLKIRAPGFAHLQSLDEMSRGHMIADAVTIIGTQDIVFGEIDR.

It belongs to the complex I 49 kDa subunit family. As to quaternary structure, NDH-1 is composed of 14 different subunits. Subunits NuoB, C, D, E, F, and G constitute the peripheral sector of the complex.

It localises to the cell inner membrane. The catalysed reaction is a quinone + NADH + 5 H(+)(in) = a quinol + NAD(+) + 4 H(+)(out). Functionally, NDH-1 shuttles electrons from NADH, via FMN and iron-sulfur (Fe-S) centers, to quinones in the respiratory chain. The immediate electron acceptor for the enzyme in this species is believed to be ubiquinone. Couples the redox reaction to proton translocation (for every two electrons transferred, four hydrogen ions are translocated across the cytoplasmic membrane), and thus conserves the redox energy in a proton gradient. This Bordetella avium (strain 197N) protein is NADH-quinone oxidoreductase subunit D.